Reading from the N-terminus, the 321-residue chain is Lipoyl synthase (321 aa).

Residues Cys68, Cys73, Cys79, Cys94, Cys98, Cys101, and Ser308 each coordinate [4Fe-4S] cluster. The 218-residue stretch at 80–297 folds into the Radical SAM core domain; the sequence is FNHGTATFMI…KALADELGFT (218 aa).

It belongs to the radical SAM superfamily. Lipoyl synthase family. The cofactor is [4Fe-4S] cluster.

It localises to the cytoplasm. It carries out the reaction [[Fe-S] cluster scaffold protein carrying a second [4Fe-4S](2+) cluster] + N(6)-octanoyl-L-lysyl-[protein] + 2 oxidized [2Fe-2S]-[ferredoxin] + 2 S-adenosyl-L-methionine + 4 H(+) = [[Fe-S] cluster scaffold protein] + N(6)-[(R)-dihydrolipoyl]-L-lysyl-[protein] + 4 Fe(3+) + 2 hydrogen sulfide + 2 5'-deoxyadenosine + 2 L-methionine + 2 reduced [2Fe-2S]-[ferredoxin]. It functions in the pathway protein modification; protein lipoylation via endogenous pathway; protein N(6)-(lipoyl)lysine from octanoyl-[acyl-carrier-protein]: step 2/2. In terms of biological role, catalyzes the radical-mediated insertion of two sulfur atoms into the C-6 and C-8 positions of the octanoyl moiety bound to the lipoyl domains of lipoate-dependent enzymes, thereby converting the octanoylated domains into lipoylated derivatives. This chain is Lipoyl synthase, found in Shewanella putrefaciens (strain CN-32 / ATCC BAA-453).